The following is a 1009-amino-acid chain: Putative receptor-like protein 8 (1009 aa).

Residues 1-22 (MKTNFVILLLLLCVFAISPSQQ) form the signal peptide. The Extracellular portion of the chain corresponds to 23–961 (EEINQHNPGI…EEDDEAPVDM (939 aa)). Asn159 and Asn197 each carry an N-linked (GlcNAc...) asparagine glycan. An LRR 1; degenerate repeat occupies 204 to 231 (FEEVRSLELSAGLNGFVDNVEGYKSLRK). LRR repeat units follow at residues 232–255 (LKNLEILDLSYNNRFNNNILPFIN), 257–281 (ATSLTSLSLQNNSMEGPFPFEEIKD), 282–305 (LTNLKLLDLSRNILKGPMQGLTHL), 306–329 (KKLKALDLSNNVFSSIMELQVVCE), 331–354 (KNLWELDLRENKFVGQLPLCLGRL), 355–377 (NKLRVLDLSSNQLNGNLPSTFNR), 379–402 (ESLEYLSLLDNNFTGFFSFDPLAN), 404–427 (TKLKVFKLSSTSDMLQIKTESEPK), 442–465 (LEKIPSFLLQDNLFTIFQMPATIV), 466–490 (HELQFLDFSVNDISGLLPDNIGYAL), 492–514 (NLLRMNGSRNGFQGHLPSSMGEM), 515–538 (VNITSLDLSYNNFSGKLPRRFVTG), 540–565 (FSLKHLKLSHNNFSGHFLPRETSFTS), 567–587 (EELRVDSNSFTGKIGVGLLSS), 588–612 (NTTLSVLDMSNNFLTGDIPSWMSNL), 613–636 (SGLTILSISNNFLEGTIPPSLLAI), 638–660 (FLSLIDLSGNLLSGSLPSRVGGE), 662–681 (GIKLFLHDNMLTGPIPDTLL), 682–705 (EKVQILDLRYNQLSGSIPQFVNTE), 707–728 (IYILLMKGNNLTGSMSRQLCDL), 729–752 (RNIRLLDLSDNKLNGFIPSCLYNL), 819–842 (LDYMYGMDLSSNELSGVIPAELGS), 843–866 (LSKLRVMNLSCNFLSSSIPSSFSN), 867–891 (LKDIESLDLSHNMLQGSIPQQLTNL), and 893–916 (SLVVFDVSYNNLSGIIPQGRQFNT). N-linked (GlcNAc...) asparagine glycosylation occurs at Asn267. Asn390 and Asn402 each carry an N-linked (GlcNAc...) asparagine glycan. Residues Asn497, Asn516, Asn526, and Asn551 are each glycosylated (N-linked (GlcNAc...) asparagine). 2 N-linked (GlcNAc...) asparagine glycosylation sites follow: Asn588 and Asn611. Asn716 and Asn751 each carry an N-linked (GlcNAc...) asparagine glycan. Asn850, Asn890, Asn903, and Asn934 each carry an N-linked (GlcNAc...) asparagine glycan. Residues 934–955 (NRSCDAKKTSDESENGGEEEDD) are disordered. The segment covering 945–955 (ESENGGEEEDD) has biased composition (acidic residues). A helical transmembrane segment spans residues 962-982 (LAFYFSSASTYVTTLIGIFIL). Topologically, residues 983–1009 (MCFDCPLRRAWLRIVDASIASVKSMLP) are cytoplasmic.

The protein belongs to the RLP family.

It is found in the cell membrane. In Arabidopsis thaliana (Mouse-ear cress), this protein is Putative receptor-like protein 8.